Here is a 184-residue protein sequence, read N- to C-terminus: Acireductone dioxygenase 4 (184 aa).

Fe(2+) is bound by residues His-86, His-88, Glu-92, and His-131. 4 residues coordinate Ni(2+): His-86, His-88, Glu-92, and His-131.

Belongs to the acireductone dioxygenase (ARD) family. It depends on Fe(2+) as a cofactor. Ni(2+) serves as cofactor.

It localises to the cytoplasm. The protein resides in the nucleus. The catalysed reaction is 1,2-dihydroxy-5-(methylsulfanyl)pent-1-en-3-one + O2 = 4-methylsulfanyl-2-oxobutanoate + formate + 2 H(+). It carries out the reaction 1,2-dihydroxy-5-(methylsulfanyl)pent-1-en-3-one + O2 = 3-(methylsulfanyl)propanoate + CO + formate + 2 H(+). It participates in amino-acid biosynthesis; L-methionine biosynthesis via salvage pathway; L-methionine from S-methyl-5-thio-alpha-D-ribose 1-phosphate: step 5/6. Catalyzes 2 different reactions between oxygen and the acireductone 1,2-dihydroxy-3-keto-5-methylthiopentene (DHK-MTPene) depending upon the metal bound in the active site. Fe-containing acireductone dioxygenase (Fe-ARD) produces formate and 2-keto-4-methylthiobutyrate (KMTB), the alpha-ketoacid precursor of methionine in the methionine recycle pathway. Ni-containing acireductone dioxygenase (Ni-ARD) produces methylthiopropionate, carbon monoxide and formate, and does not lie on the methionine recycle pathway. This chain is Acireductone dioxygenase 4 (ARD4), found in Oryza sativa subsp. japonica (Rice).